Consider the following 359-residue polypeptide: Src kinase-associated phosphoprotein 2 (359 aa).

A phosphoserine mark is found at Ser-5, Ser-6, and Ser-9. Positions 14-64 (PEEIRNLLADVETFVADILKGENLSKKAKEKRESLIKKIKDVKSIYLQEFQ) are homodimerization. The tract at residues 66-88 (KGDAEDGEEYDDPFAGPPDTISL) is disordered. Tyr-75 is subject to Phosphotyrosine. Ser-87 and Ser-90 each carry phosphoserine. One can recognise a PH domain in the interval 116 to 219 (FVLKAGYLEK…WVQQLKFVLQ (104 aa)). Phosphotyrosine is present on residues Tyr-151 and Tyr-197. Ser-223 is subject to Phosphoserine. Tyr-261 carries the phosphotyrosine modification. The disordered stretch occupies residues 264–293 (LPEEEEDSAPVKVEEQRKMSQDSVHHTSGD). Basic and acidic residues predominate over residues 275–293 (KVEEQRKMSQDSVHHTSGD). Phosphoserine occurs at positions 283 and 286. The region spanning 297–358 (DYANFYQGLW…PKAYIMEMYD (62 aa)) is the SH3 domain.

This sequence belongs to the SKAP family. As to quaternary structure, homodimer. Interacts with PTPNS1. Part of a complex consisting of SKAP2, FYB1 and PTPNS1. Part of a complex consisting of SKAP2, FYB1 and LILRB3. May interact with actin. Interacts with FYB1, which is required for SKAP2 protein stability. Interacts with LAT, GRB2, PTK2B and PRAM1. May interact with FYN, HCK and LYN. Interacts with FASLG. In terms of processing, phosphorylated in resting platelets. Phosphorylated by FYN on Tyr-261 upon T-cell activation. Dephosphorylated on Tyr-75 by PTPN22. In terms of tissue distribution, ubiquitously expressed. Present in platelets (at protein level).

The protein localises to the cytoplasm. Its function is as follows. May be involved in B-cell and macrophage adhesion processes. In B-cells, may act by coupling the B-cell receptor (BCR) to integrin activation. May play a role in src signaling pathway. This Homo sapiens (Human) protein is Src kinase-associated phosphoprotein 2 (SKAP2).